Reading from the N-terminus, the 382-residue chain is MSVASFFSSLPARPFGYKDGRGRTGMVSTTDIGRRMVKPPVLACRPIESNTYHGSVFLTKSSRSPSPSLSPTPTALDDEIVLDLKPFLIIYKSGRIERFLGTTVIPACPEVATKDVVIDPATGVSVRLYLPNVVDLPSKKLPVLVYFHGGGFVIENTGSPNYHNYLTLLAAKAGVLIVSINYRLAPEYPLPASYDDCMAGFNWVVSHSAGPALEPWLAQHGDFSQILLSGDSAGGNVTHYVAMRADAGVIEGVAIVHPYFLGSEPVGNEINDPANIEFHDKLWRLAAPDTEGLDDPLINPVAPGAPILAGLKCKRAVVFVAGNDFLVERGRMYYEALVKSGWGGEAELVQHEGVGHVFHLSDYSGDISVAMMTKLIAFLKGE.

The transit peptide at Met-1–Thr-74 directs the protein to the chloroplast. Residue Ser-232 is the Acyl-ester intermediate of the active site. Catalysis depends on charge relay system residues Asp-324 and His-356.

Belongs to the AB hydrolase superfamily. In terms of assembly, homodimer. As to expression, expressed in roots, stems, leaves, petals, stamens and pistils, but not in bulb scales.

Its subcellular location is the plastid. It localises to the chloroplast. The enzyme catalyses 6-tuliposide A = tulipalin A + D-glucose. Inhibited by NaF, AgNO(3), HgCl(2), CuSO(4) and phenylmethylsulfonyl fluoride (PMSF). In terms of biological role, lactone-forming carboxylesterases, specifically catalyzing intramolecular transesterification, but not hydrolysis. Involved in the biosynthesis of tulipalins, defensive chemicals that show antimicrobial activities against a broad range of strains of bacteria and fungi. Substrates are 6-tuliposide A &gt; 6-tuliposide B. The protein is Tuliposide A-converting enzyme 2, chloroplastic (TCEA2) of Tulipa gesneriana (Garden tulip).